Here is a 252-residue protein sequence, read N- to C-terminus: Imidazole glycerol phosphate synthase subunit HisF (252 aa).

Catalysis depends on residues aspartate 11 and aspartate 130.

It belongs to the HisA/HisF family. As to quaternary structure, heterodimer of HisH and HisF.

The protein resides in the cytoplasm. The enzyme catalyses 5-[(5-phospho-1-deoxy-D-ribulos-1-ylimino)methylamino]-1-(5-phospho-beta-D-ribosyl)imidazole-4-carboxamide + L-glutamine = D-erythro-1-(imidazol-4-yl)glycerol 3-phosphate + 5-amino-1-(5-phospho-beta-D-ribosyl)imidazole-4-carboxamide + L-glutamate + H(+). Its pathway is amino-acid biosynthesis; L-histidine biosynthesis; L-histidine from 5-phospho-alpha-D-ribose 1-diphosphate: step 5/9. In terms of biological role, IGPS catalyzes the conversion of PRFAR and glutamine to IGP, AICAR and glutamate. The HisF subunit catalyzes the cyclization activity that produces IGP and AICAR from PRFAR using the ammonia provided by the HisH subunit. The protein is Imidazole glycerol phosphate synthase subunit HisF of Thermococcus kodakarensis (strain ATCC BAA-918 / JCM 12380 / KOD1) (Pyrococcus kodakaraensis (strain KOD1)).